The following is an 89-amino-acid chain: Small ribosomal subunit protein uS15 (89 aa).

Over residues 1 to 18 the composition is skewed to basic and acidic residues; it reads MSLDTAEKQKLIENHQVH. Residues 1-23 form a disordered region; it reads MSLDTAEKQKLIENHQVHPTDTG.

The protein belongs to the universal ribosomal protein uS15 family. In terms of assembly, part of the 30S ribosomal subunit. Forms a bridge to the 50S subunit in the 70S ribosome, contacting the 23S rRNA.

Its function is as follows. One of the primary rRNA binding proteins, it binds directly to 16S rRNA where it helps nucleate assembly of the platform of the 30S subunit by binding and bridging several RNA helices of the 16S rRNA. In terms of biological role, forms an intersubunit bridge (bridge B4) with the 23S rRNA of the 50S subunit in the ribosome. The protein is Small ribosomal subunit protein uS15 of Prochlorococcus marinus (strain AS9601).